Reading from the N-terminus, the 599-residue chain is UvrABC system protein C (599 aa).

A GIY-YIG domain is found at 15-93 (EKPGCYQYFD…IKEYQPRYNV (79 aa)). Residues 207–242 (HRLVRMYRDRMQVYSEGLRFEEAQICKERIELLERY) form the UVR domain.

This sequence belongs to the UvrC family. Interacts with UvrB in an incision complex.

The protein resides in the cytoplasm. Its function is as follows. The UvrABC repair system catalyzes the recognition and processing of DNA lesions. UvrC both incises the 5' and 3' sides of the lesion. The N-terminal half is responsible for the 3' incision and the C-terminal half is responsible for the 5' incision. The polypeptide is UvrABC system protein C (Porphyromonas gingivalis (strain ATCC BAA-308 / W83)).